A 242-amino-acid chain; its full sequence is Zinc import ATP-binding protein ZnuC (242 aa).

Positions 24–241 (INVKNLSFFY…EKFLKMFSSY (218 aa)) constitute an ABC transporter domain. 56–63 (GPNGGGKT) contributes to the ATP binding site.

This sequence belongs to the ABC transporter superfamily. Zinc importer (TC 3.A.1.15.5) family. The complex is composed of two ATP-binding proteins (ZnuC), two transmembrane proteins (ZnuB) and a solute-binding protein (ZnuA).

It is found in the cell inner membrane. It catalyses the reaction Zn(2+)(out) + ATP(in) + H2O(in) = Zn(2+)(in) + ADP(in) + phosphate(in) + H(+)(in). Part of the ABC transporter complex ZnuABC involved in zinc import. Responsible for energy coupling to the transport system. The sequence is that of Zinc import ATP-binding protein ZnuC from Ehrlichia canis (strain Jake).